A 413-amino-acid chain; its full sequence is uncharacterized protein (413 aa).

The region spanning 2-129 (RILIVDDENT…KTTWKLRLME (128 aa)) is the Response regulatory domain. Asp-54 is modified (4-aspartylphosphate).

This is an uncharacterized protein from Sinorhizobium fredii (strain NBRC 101917 / NGR234).